The chain runs to 681 residues: Protein NirI (681 aa).

An N-terminal signal peptide occupies residues 1-30 (MAMPGKSSHAPSRLLLALLTLILLALPARP). The next 5 membrane-spanning stretches (helical) occupy residues 394 to 414 (IPGI…LFGQ), 436 to 456 (LVVL…VAFL), 468 to 488 (FLIE…LLFW), 535 to 555 (TLFV…LILA), and 568 to 588 (FLRA…GLFI).

The protein to P.stutzeri NosR.

The protein resides in the cell membrane. This chain is Protein NirI (nirI), found in Paracoccus denitrificans (strain Pd 1222).